The primary structure comprises 430 residues: Adenylosuccinate synthetase (430 aa).

Residues Gly13–Lys19 and Gly41–Thr43 contribute to the GTP site. Asp14 acts as the Proton acceptor in catalysis. Mg(2+) is bound by residues Asp14 and Gly41. IMP contacts are provided by residues Asp14–Lys17, Asn39–His42, Thr130, Arg144, Gln225, Thr240, and Arg304. His42 (proton donor) is an active-site residue. Residue Ala300 to Arg306 coordinates substrate. GTP is bound by residues Arg306, Lys332 to Asp334, and Ser414 to Gly416.

Belongs to the adenylosuccinate synthetase family. As to quaternary structure, homodimer. The cofactor is Mg(2+).

Its subcellular location is the cytoplasm. It carries out the reaction IMP + L-aspartate + GTP = N(6)-(1,2-dicarboxyethyl)-AMP + GDP + phosphate + 2 H(+). It functions in the pathway purine metabolism; AMP biosynthesis via de novo pathway; AMP from IMP: step 1/2. In terms of biological role, plays an important role in the de novo pathway of purine nucleotide biosynthesis. Catalyzes the first committed step in the biosynthesis of AMP from IMP. The sequence is that of Adenylosuccinate synthetase from Xylella fastidiosa (strain 9a5c).